Here is a 153-residue protein sequence, read N- to C-terminus: MIQELKADLNGKGQKHCVIVSRFNEFITENLLKGALESFRMHGVREEDVTVVRVPGAYEMPVVVAKVAASKKYNSIVCLGAVIRGATAHFDFVAGESAKIGSIGVQHSIPVVFGVLTTDTIEQAIERAGTKAGNKGAEAAATAVEMVNLLSLL.

Residues F23, 57 to 59 (AYE), and 81 to 83 (AVI) each bind 5-amino-6-(D-ribitylamino)uracil. Position 86–87 (86–87 (AT)) interacts with (2S)-2-hydroxy-3-oxobutyl phosphate. Catalysis depends on H89, which acts as the Proton donor. F113 serves as a coordination point for 5-amino-6-(D-ribitylamino)uracil. Residue R127 coordinates (2S)-2-hydroxy-3-oxobutyl phosphate.

Belongs to the DMRL synthase family.

It carries out the reaction (2S)-2-hydroxy-3-oxobutyl phosphate + 5-amino-6-(D-ribitylamino)uracil = 6,7-dimethyl-8-(1-D-ribityl)lumazine + phosphate + 2 H2O + H(+). The protein operates within cofactor biosynthesis; riboflavin biosynthesis; riboflavin from 2-hydroxy-3-oxobutyl phosphate and 5-amino-6-(D-ribitylamino)uracil: step 1/2. Functionally, catalyzes the formation of 6,7-dimethyl-8-ribityllumazine by condensation of 5-amino-6-(D-ribitylamino)uracil with 3,4-dihydroxy-2-butanone 4-phosphate. This is the penultimate step in the biosynthesis of riboflavin. In Leptospira borgpetersenii serovar Hardjo-bovis (strain JB197), this protein is 6,7-dimethyl-8-ribityllumazine synthase.